A 257-amino-acid polypeptide reads, in one-letter code: Acetylglutamate kinase (257 aa).

Substrate-binding positions include 43–44, R65, and N157; that span reads GG. ATP is bound by residues 180–185 and 208–210; these read DVSGIL and IIT.

The protein belongs to the acetylglutamate kinase family. ArgB subfamily. As to quaternary structure, homodimer.

It is found in the cytoplasm. The catalysed reaction is N-acetyl-L-glutamate + ATP = N-acetyl-L-glutamyl 5-phosphate + ADP. It participates in amino-acid biosynthesis; L-arginine biosynthesis; N(2)-acetyl-L-ornithine from L-glutamate: step 2/4. In terms of biological role, catalyzes the ATP-dependent phosphorylation of N-acetyl-L-glutamate. The protein is Acetylglutamate kinase of Salmonella paratyphi B (strain ATCC BAA-1250 / SPB7).